The sequence spans 115 residues: Putative type I restriction enzyme MpnIIP endonuclease subunit middle part (115 aa).

In terms of biological role, the middle section of a putative type I restriction enzyme that if reconstituted might recognize 5'-GAN(7)TAY-3' and cleave a random distance away. Subunit R is required for both nuclease and ATPase activities, but not for modification. The sequence is that of Putative type I restriction enzyme MpnIIP endonuclease subunit middle part from Mycoplasma pneumoniae (strain ATCC 29342 / M129 / Subtype 1) (Mycoplasmoides pneumoniae).